Here is a 51-residue protein sequence, read N- to C-terminus: Large ribosomal subunit protein bL33 (51 aa).

It belongs to the bacterial ribosomal protein bL33 family.

In Alteromonas mediterranea (strain DSM 17117 / CIP 110805 / LMG 28347 / Deep ecotype), this protein is Large ribosomal subunit protein bL33.